We begin with the raw amino-acid sequence, 368 residues long: MSKPRTRVAVIFGGRSNEHSVSCVSAGSVLRNLDPERYEVVPIGITTEGSWVLGSTDPESLSIRGRSLPSVDADGSALALTADPTRSGDLVALDDGEAGKILASVDVVFPVLHGAYGEDGTIQGLLELAGVPYVGPGVLASAAGMDKEFTKKLLAAEGLPIGFQVVLRPGTATLTDEQRSRLHLPVFVKPARGGSSIGITRVAEWAALDDAIAHARRHDPKVIVESGIAGREVECGVLEFPDGDVRASVIAEIRMPEGADDDEAFYDFDSKYLDDVCEFDVPAKLEDSVSDEIRALAVRAFSALDCQGLARVDFFVTEDGPVINEINTMPGFTSISMYPRMWDAVGVDYGTLVSTLVDTALARGTGLR.

Residues 151-358 (KKLLAAEGLP…YGTLVSTLVD (208 aa)) enclose the ATP-grasp domain. 179 to 234 (RSRLHLPVFVKPARGGSSIGITRVAEWAALDDAIAHARRHDPKVIVESGIAGREVE) is a binding site for ATP. 3 residues coordinate Mg(2+): D313, E325, and N327.

It belongs to the D-alanine--D-alanine ligase family. Requires Mg(2+) as cofactor. The cofactor is Mn(2+).

It localises to the cytoplasm. The enzyme catalyses 2 D-alanine + ATP = D-alanyl-D-alanine + ADP + phosphate + H(+). It functions in the pathway cell wall biogenesis; peptidoglycan biosynthesis. In terms of biological role, cell wall formation. This chain is D-alanine--D-alanine ligase, found in Rhodococcus opacus (strain B4).